Here is a 77-residue protein sequence, read N- to C-terminus: Acyl carrier protein (77 aa).

In terms of domain architecture, Carrier spans 1–76 (MAVFEDVRDV…DVVNYIEKLG (76 aa)). O-(pantetheine 4'-phosphoryl)serine is present on Ser36.

The protein belongs to the acyl carrier protein (ACP) family. Post-translationally, 4'-phosphopantetheine is transferred from CoA to a specific serine of apo-ACP by AcpS. This modification is essential for activity because fatty acids are bound in thioester linkage to the sulfhydryl of the prosthetic group.

It is found in the cytoplasm. It functions in the pathway lipid metabolism; fatty acid biosynthesis. Carrier of the growing fatty acid chain in fatty acid biosynthesis. This chain is Acyl carrier protein, found in Campylobacter concisus (strain 13826).